We begin with the raw amino-acid sequence, 339 residues long: MADPRFFRVAGPFTLAQLAELSGASVAEGCDLGASFVDVAPLEQAGQDNVSFLDNRKYVGAFQASKAGLCVIAPEMADKAPEGMALLLSPDPYRAYARIAQAFYPNPAPEPWVAPTAWVDASAAVGEGCRIEPGAVIGAGARIGARCRIGANVVIGQGVVLGDDCTIGANATVSHALVGSRVNIYPGARIGQDGFGFAMGPQGHLKVPQLGRVLIGNNVEIGANTTIDRGAGPDTVIGDGSMIDNLVQIGHNVQLGRGCVIVAQVGISGSTRMGDFVAAGGQAGITGHLKIGAGAKIAAQAGVMRDIAPGETVGGAPAVPMADWLRQSAILGKMARKKS.

His251 serves as the catalytic Proton acceptor.

Belongs to the transferase hexapeptide repeat family. LpxD subfamily. Homotrimer.

It carries out the reaction a UDP-3-O-[(3R)-3-hydroxyacyl]-alpha-D-glucosamine + a (3R)-hydroxyacyl-[ACP] = a UDP-2-N,3-O-bis[(3R)-3-hydroxyacyl]-alpha-D-glucosamine + holo-[ACP] + H(+). The protein operates within bacterial outer membrane biogenesis; LPS lipid A biosynthesis. In terms of biological role, catalyzes the N-acylation of UDP-3-O-acylglucosamine using 3-hydroxyacyl-ACP as the acyl donor. Is involved in the biosynthesis of lipid A, a phosphorylated glycolipid that anchors the lipopolysaccharide to the outer membrane of the cell. The protein is UDP-3-O-acylglucosamine N-acyltransferase of Paramagnetospirillum magneticum (strain ATCC 700264 / AMB-1) (Magnetospirillum magneticum).